Consider the following 386-residue polypeptide: Glucose-1-phosphate adenylyltransferase (386 aa).

Alpha-D-glucose 1-phosphate-binding positions include Tyr100, Gly165, 180–181 (EK), and Ser191.

This sequence belongs to the bacterial/plant glucose-1-phosphate adenylyltransferase family. As to quaternary structure, homotetramer.

The catalysed reaction is alpha-D-glucose 1-phosphate + ATP + H(+) = ADP-alpha-D-glucose + diphosphate. It functions in the pathway glycan biosynthesis; glycogen biosynthesis. Functionally, involved in the biosynthesis of ADP-glucose, a building block required for the elongation reactions to produce glycogen. Catalyzes the reaction between ATP and alpha-D-glucose 1-phosphate (G1P) to produce pyrophosphate and ADP-Glc. In Clostridium botulinum (strain Eklund 17B / Type B), this protein is Glucose-1-phosphate adenylyltransferase.